The sequence spans 182 residues: MNLSNHFLVAMPDMEDAFFSQSVVYICKHDEDGALGIAINKPSPITMDMIFSATGKNIPMRMQHDSVMMGGPVQVERGYVVHTPIGNWQSSIGVSDGIALTSSRDVLENISREGAVDKALISIGYSSWSKGQLERELADNAWLTVPADEHILFDIPYEHRYAAAFAKLGIDPLALFSGAGHA.

The protein belongs to the UPF0301 (AlgH) family.

The protein is UPF0301 protein NGK_1355 of Neisseria gonorrhoeae (strain NCCP11945).